Consider the following 586-residue polypeptide: Solute carrier family 13 member 2 (586 aa).

3 helical membrane passes run 13–33 (SYLI…IVQT), 53–73 (ALPL…MGIM), and 86–106 (TNIL…WNLH). Positions 165–175 (DVEEGNSNPSF) are enriched in polar residues. The interval 165–209 (DVEEGNSNPSFELQEASPQKEETKLDNGQAVSVSSEPRAQKTKEH) is disordered. The next 9 membrane-spanning stretches (helical) occupy residues 215–235 (GLSL…LTGT), 264–284 (FAFP…QVLF), 319–339 (PMSF…VLWF), 366–386 (GTVA…IPGL), 407–427 (TVND…FALA), 445–465 (PLQH…VAIF), 478–498 (FLPI…YVML), 506–526 (LAFM…FGGL), and 535–555 (GFLL…SWSI).

This sequence belongs to the SLC13A/DASS transporter (TC 2.A.47) family. NADC subfamily. Highly expressed in kidney and small intestine. Not detectable in brain, heart, stomach and skeletal muscle.

Its subcellular location is the apical cell membrane. It catalyses the reaction succinate(out) + 3 Na(+)(out) = succinate(in) + 3 Na(+)(in). It carries out the reaction fumarate(out) + 3 Na(+)(out) = fumarate(in) + 3 Na(+)(in). The enzyme catalyses 2-oxoglutarate(out) + 3 Na(+)(out) = 2-oxoglutarate(in) + 3 Na(+)(in). Li(+) decreases succinate transport in the presence of Na(+), by competing at one of the three cation binding sites. In terms of biological role, low-affinity sodium-dicarboxylate cotransporter, that mediates the entry of citric acid cycle intermediates, such as succinate, citrate, fumarate and alpha-ketoglutarate (2-oxoglutarate) into the small intestine and renal proximal tubule. Can transport citrate in a Na(+)-dependent manner, recognizing the divalent form of citrate rather than the trivalent form which is normally found in blood. Transports the dicarboxylate into the cell with a probable stoichiometry of 3 Na(+) for 1 divalent dicarboxylate, rendering the process electrogenic. Has a critical role in renal dicarboxylate transport. This is Solute carrier family 13 member 2 (Slc13a2) from Mus musculus (Mouse).